A 181-amino-acid chain; its full sequence is uncharacterized protein (181 aa).

Positions 151–181 (AQKKKDFQEPENKHEQLTSTKAPCQENWSDF) are disordered. Residues 154–166 (KKDFQEPENKHEQ) are compositionally biased toward basic and acidic residues. Over residues 167-181 (LTSTKAPCQENWSDF) the composition is skewed to polar residues.

This is an uncharacterized protein from Caenorhabditis elegans.